The following is a 72-amino-acid chain: Large ribosomal subunit protein uL29 (72 aa).

It belongs to the universal ribosomal protein uL29 family.

In Rhodopirellula baltica (strain DSM 10527 / NCIMB 13988 / SH1), this protein is Large ribosomal subunit protein uL29.